The primary structure comprises 930 residues: G patch domain-containing protein TGH (930 aa).

A Glycyl lysine isopeptide (Lys-Gly) (interchain with G-Cter in ubiquitin) cross-link involves residue K25. Positions G76–D152 are disordered. Residues S159–Y199 form the G-patch domain. Residues L405 to A447 form an SURP motif repeat. Disordered stretches follow at residues A478 to Q508, R687 to A751, and F773 to D930. A compositionally biased stretch (basic and acidic residues) spans P489 to D498. Polar residues predominate over residues T499–Q508. Residues I701–E711 show a composition bias toward acidic residues. Over residues E779–T808 the composition is skewed to basic and acidic residues. The segment covering R848–R857 has biased composition (basic residues). A compositionally biased stretch (basic and acidic residues) spans H858–G877. Residues R892–S908 are compositionally biased toward basic residues. Over residues S913–R923 the composition is skewed to basic and acidic residues.

As to expression, expressed in vasculature of cotyledons and leaves, young meristematic tissues, trichomes and pistils.

It is found in the nucleus speckle. It localises to the nucleus. Its subcellular location is the nucleoplasm. Its function is as follows. Functions as a component of microRNA (miRNA) and small interfering RNA (siRNA) biogenesis. May assist DCL1 and DCL4 to efficiently process and/or recruit the precursors of miRNAs and siRNAs. In the miRNA biogenesis pathway, associates with the DCL1 complex that processes primary miRNAs (pri-miRNAs) into miRNAs. Binds pri-miRNAs and precursor miRNAs (pre-miRNAs). Is required for the interaction between pri-miRNAs and DRB1. Required for general proper plant growth and, in particular, initiation of vascular development. Interacts genetically with AMP1, a glutamate carboxypeptidase involved in the regulation of meristem function. This chain is G patch domain-containing protein TGH, found in Arabidopsis thaliana (Mouse-ear cress).